The primary structure comprises 175 residues: Peptide deformylase (175 aa).

Fe cation is bound by residues cysteine 96 and histidine 138. The active site involves glutamate 139. Histidine 142 is a binding site for Fe cation.

The protein belongs to the polypeptide deformylase family. Fe(2+) serves as cofactor.

The enzyme catalyses N-terminal N-formyl-L-methionyl-[peptide] + H2O = N-terminal L-methionyl-[peptide] + formate. In terms of biological role, removes the formyl group from the N-terminal Met of newly synthesized proteins. Requires at least a dipeptide for an efficient rate of reaction. N-terminal L-methionine is a prerequisite for activity but the enzyme has broad specificity at other positions. The protein is Peptide deformylase of Rhodopseudomonas palustris (strain BisB18).